The primary structure comprises 330 residues: ADP-L-glycero-D-manno-heptose-6-epimerase (330 aa).

NADP(+) is bound by residues 11 to 12, 32 to 33, K39, K54, 75 to 79, and N92; these read FI, DN, and EGACS. Catalysis depends on Y139, which acts as the Proton acceptor. NADP(+) is bound at residue K143. N168 is a substrate binding site. Residues V169 and K177 each coordinate NADP(+). K177 acts as the Proton acceptor in catalysis. Substrate is bound by residues R179, H186, 200–203, R213, and Y292; that span reads FGEY.

This sequence belongs to the NAD(P)-dependent epimerase/dehydratase family. HldD subfamily. As to quaternary structure, homopentamer. NADP(+) serves as cofactor.

It carries out the reaction ADP-D-glycero-beta-D-manno-heptose = ADP-L-glycero-beta-D-manno-heptose. The protein operates within nucleotide-sugar biosynthesis; ADP-L-glycero-beta-D-manno-heptose biosynthesis; ADP-L-glycero-beta-D-manno-heptose from D-glycero-beta-D-manno-heptose 7-phosphate: step 4/4. Functionally, catalyzes the interconversion between ADP-D-glycero-beta-D-manno-heptose and ADP-L-glycero-beta-D-manno-heptose via an epimerization at carbon 6 of the heptose. This is ADP-L-glycero-D-manno-heptose-6-epimerase from Burkholderia cenocepacia (strain HI2424).